The sequence spans 190 residues: uncharacterized protein (190 aa).

4 consecutive transmembrane segments (helical) span residues 15 to 35, 58 to 78, 94 to 114, and 148 to 168; these read LVMSCSVTLLFSSSLSFVLAI, FSSFFFFFTTSPDSSPVGVLI, FFSASSLYSSIDLGSILYFAF, and FLFFVGSSKAFLTCSSLSFFV.

Its subcellular location is the membrane. This is an uncharacterized protein from Saccharomyces cerevisiae (strain ATCC 204508 / S288c) (Baker's yeast).